Consider the following 185-residue polypeptide: Large ribosomal subunit protein uL5 (185 aa).

This sequence belongs to the universal ribosomal protein uL5 family. In terms of assembly, part of the 50S ribosomal subunit; part of the 5S rRNA/L5/L18/L25 subcomplex. Contacts the 5S rRNA and the P site tRNA. Forms a bridge to the 30S subunit in the 70S ribosome.

Functionally, this is one of the proteins that bind and probably mediate the attachment of the 5S RNA into the large ribosomal subunit, where it forms part of the central protuberance. In the 70S ribosome it contacts protein S13 of the 30S subunit (bridge B1b), connecting the 2 subunits; this bridge is implicated in subunit movement. Contacts the P site tRNA; the 5S rRNA and some of its associated proteins might help stabilize positioning of ribosome-bound tRNAs. This is Large ribosomal subunit protein uL5 from Xanthobacter autotrophicus (strain ATCC BAA-1158 / Py2).